Consider the following 564-residue polypeptide: uncharacterized protein (564 aa).

A signal peptide spans 1–21 (MRRIGAITALSLPVLLSLLYS). Cys-22 carries N-palmitoyl cysteine lipidation. Cys-22 carries the S-diacylglycerol cysteine lipid modification.

Its subcellular location is the cell membrane. This is an uncharacterized protein from Aquifex aeolicus (strain VF5).